A 209-amino-acid chain; its full sequence is Histidine biosynthesis bifunctional protein HisIE (209 aa).

Residues 1–116 (MKQADELRFN…EEQAADRFGI (116 aa)) are phosphoribosyl-AMP cyclohydrolase. The tract at residues 117–209 (MNELERVIAE…LKKRHSEIEE (93 aa)) is phosphoribosyl-ATP pyrophosphohydrolase.

In the N-terminal section; belongs to the PRA-CH family. This sequence in the C-terminal section; belongs to the PRA-PH family.

It localises to the cytoplasm. The catalysed reaction is 1-(5-phospho-beta-D-ribosyl)-ATP + H2O = 1-(5-phospho-beta-D-ribosyl)-5'-AMP + diphosphate + H(+). It catalyses the reaction 1-(5-phospho-beta-D-ribosyl)-5'-AMP + H2O = 1-(5-phospho-beta-D-ribosyl)-5-[(5-phospho-beta-D-ribosylamino)methylideneamino]imidazole-4-carboxamide. The protein operates within amino-acid biosynthesis; L-histidine biosynthesis; L-histidine from 5-phospho-alpha-D-ribose 1-diphosphate: step 2/9. It participates in amino-acid biosynthesis; L-histidine biosynthesis; L-histidine from 5-phospho-alpha-D-ribose 1-diphosphate: step 3/9. The polypeptide is Histidine biosynthesis bifunctional protein HisIE (hisI) (Bacillus subtilis (strain 168)).